We begin with the raw amino-acid sequence, 358 residues long: Protein-glutamate methylesterase/protein-glutamine glutaminase 1 (358 aa).

The region spanning 8-125 is the Response regulatory domain; that stretch reads RVLIVDDSAV…ARGLEGYAEE (118 aa). Asp-59 is modified (4-aspartylphosphate). One can recognise a CheB-type methylesterase domain in the interval 165-352; that stretch reads FRTTDRLIAI…LDRVAERLLA (188 aa). Residues Ser-177, His-203, and Asp-299 contribute to the active site.

The protein belongs to the CheB family. In terms of processing, phosphorylated by CheA. Phosphorylation of the N-terminal regulatory domain activates the methylesterase activity.

The protein resides in the cytoplasm. It catalyses the reaction [protein]-L-glutamate 5-O-methyl ester + H2O = L-glutamyl-[protein] + methanol + H(+). The enzyme catalyses L-glutaminyl-[protein] + H2O = L-glutamyl-[protein] + NH4(+). In terms of biological role, involved in chemotaxis. Part of a chemotaxis signal transduction system that modulates chemotaxis in response to various stimuli. Catalyzes the demethylation of specific methylglutamate residues introduced into the chemoreceptors (methyl-accepting chemotaxis proteins or MCP) by CheR. Also mediates the irreversible deamidation of specific glutamine residues to glutamic acid. In Xanthomonas axonopodis pv. citri (strain 306), this protein is Protein-glutamate methylesterase/protein-glutamine glutaminase 1.